Consider the following 243-residue polypeptide: Ribonuclease 3 (243 aa).

An RNase III domain is found at 19–144 (FNTLHKLLGF…LVGAIYLDRG (126 aa)). Mg(2+) is bound at residue Glu-61. The active site involves Asp-65. Mg(2+) is bound by residues Asn-130 and Glu-133. Glu-133 is an active-site residue. The DRBM domain maps to 172–240 (SYKSLLIEWC…SKRAYYALQN (69 aa)).

It belongs to the ribonuclease III family. Homodimer. Mg(2+) serves as cofactor.

It localises to the cytoplasm. The catalysed reaction is Endonucleolytic cleavage to 5'-phosphomonoester.. Its function is as follows. Digests double-stranded RNA. Involved in the processing of primary rRNA transcript to yield the immediate precursors to the large and small rRNAs (23S and 16S). Processes some mRNAs, and tRNAs when they are encoded in the rRNA operon. Processes pre-crRNA and tracrRNA of type II CRISPR loci if present in the organism. This is Ribonuclease 3 (rnc) from Zunongwangia profunda (strain DSM 18752 / CCTCC AB 206139 / SM-A87) (Wangia profunda).